The sequence spans 44 residues: MESPAFFFTFFLWFLLLSVTGYSVYVSFGPPSKKLRDPFEEHED.

The helical transmembrane segment at 6–26 (FFFTFFLWFLLLSVTGYSVYV) threads the bilayer.

This sequence belongs to the PsbN family.

It is found in the plastid. Its subcellular location is the chloroplast thylakoid membrane. May play a role in photosystem I and II biogenesis. The protein is Protein PsbN of Chlamydomonas reinhardtii (Chlamydomonas smithii).